A 710-amino-acid chain; its full sequence is WD repeat-containing protein CG11141 (710 aa).

WD repeat units follow at residues 31–70 (FFPA…MQKL) and 133–172 (LHKC…HLSK). The interval 283-307 (LNPKQRSEPSGTHHTSASTSSTRHS) is disordered. Over residues 292 to 307 (SGTHHTSASTSSTRHS) the composition is skewed to low complexity. Position 488 is a phosphothreonine (Thr488). Ser553 carries the post-translational modification Phosphoserine. Disordered regions lie at residues 612–635 (ASIQ…GEPV) and 685–710 (DPLA…FLDN). 2 stretches are compositionally biased toward polar residues: residues 613-624 (SIQTSSRENATN) and 694-704 (PATSDSNTSSE).

This sequence belongs to the WD repeat KIAA0329 family.

This is WD repeat-containing protein CG11141 from Drosophila melanogaster (Fruit fly).